A 185-amino-acid chain; its full sequence is uncharacterized protein (185 aa).

This is an uncharacterized protein from Acanthamoeba polyphaga (Amoeba).